We begin with the raw amino-acid sequence, 344 residues long: AI-2 transport protein TqsA (344 aa).

The Cytoplasmic portion of the chain corresponds to 1–4 (MAKP). The helical transmembrane segment at 5-25 (IITLNGLKIVIMLGMLVIILC) threads the bilayer. The Periplasmic segment spans residues 26-30 (GIRFA). The helical transmembrane segment at 31-51 (AEIIVPFILALFIAVILNPLV) threads the bilayer. Topologically, residues 52-61 (QHMVRWRVPR) are cytoplasmic. A helical membrane pass occupies residues 62 to 82 (VLAVSILMTIIVMAMVLLLAY). At 83 to 149 (LGSALNELTR…LLTQLSNAMS (67 aa)) the chain is on the periplasmic side. The chain crosses the membrane as a helical span at residues 150–170 (SIFLLLLTVLFMLLEVPQLPG). Topologically, residues 171-196 (KFQQMMARPVEGMAAIQRAIDSVSHY) are cytoplasmic. The helical transmembrane segment at 197 to 217 (LVLKTAISIITGLVAWAMLAA) threads the bilayer. At 218-221 (LDVR) the chain is on the periplasmic side. A helical transmembrane segment spans residues 222-242 (FAFVWGLLAFALNYIPNIGSV). Over 243 to 257 (LAAIPPIAQVLVFNG) the chain is Cytoplasmic. The helical transmembrane segment at 258–278 (FYEALLVLAGYLLINLVFGNI) threads the bilayer. Residues 279–292 (LEPRIMGRGLGLST) lie on the Periplasmic side of the membrane. A helical membrane pass occupies residues 293-313 (LVVFLSLIFWGWLLGPVGMLL). Residues 314–344 (SVPLTIIVKIALEQTAGGQSIAVLLSDLNKE) lie on the Cytoplasmic side of the membrane.

The protein belongs to the autoinducer-2 exporter (AI-2E) (TC 2.A.86) family.

It localises to the cell inner membrane. It carries out the reaction (2R,4S)-2-methyltetrahydrofuran-2,3,3,4-tetrol(in) = (2R,4S)-2-methyltetrahydrofuran-2,3,3,4-tetrol(out). Its function is as follows. Involved in the transport of the quorum-sensing signal autoinducer 2 (AI-2). Controls the transport of AI-2 either by enhancing its secretion or inhibiting its uptake and consequently represses biofilm formation and motility and affects the global gene expression in biofilms. The chain is AI-2 transport protein TqsA from Escherichia coli (strain K12).